A 172-amino-acid chain; its full sequence is Bone marrow stromal antigen 2 (172 aa).

Residues 1-30 (MAPSFYHYLPVPMDEMGGKQGWGSHRQWLG) are Cytoplasmic-facing. The helical; Signal-anchor for type II membrane protein transmembrane segment at 31–51 (AAILVVLFGVTLVILTIYFAV) threads the bilayer. Residues 52–152 (TANSVACRDG…ETSSTVQVNS (101 aa)) lie on the Extracellular side of the membrane. Asparagine 70 is a glycosylation site (N-linked (GlcNAc...) asparagine). The stretch at 74-147 (LLQRQLTRTQ…LRIQKETSST (74 aa)) forms a coiled coil. Asparagine 94 carries an N-linked (GlcNAc...) asparagine; atypical glycan. An N-linked (GlcNAc...) asparagine glycan is attached at asparagine 97. Serine 152 carries the GPI-anchor amidated serine lipid modification. A propeptide spans 153-172 (GSSMVVSSLLVLKVSLFLLF) (removed in mature form).

As to quaternary structure, parallel homodimer; disulfide-linked. May form homotetramers under reducing conditions. Isoform 1 and isoform 2 form homodimers and also heterodimers with each other. Dimerization is essential for its antiviral activity. Interacts (via cytoplasmic domain) with ARHGAP44. Interacts with MMP14 (via C-terminal cytoplasmic tail). Interacts with LILRA4/ILT7. Interacts with RNF115. As to expression, in naive mice, specifically expressed on type I interferon-producing cells (at protein level).

It localises to the golgi apparatus. It is found in the trans-Golgi network. The protein localises to the cell membrane. Its subcellular location is the late endosome. The protein resides in the membrane raft. It localises to the cytoplasm. It is found in the apical cell membrane. In terms of biological role, IFN-induced antiviral host restriction factor which efficiently blocks the release of diverse mammalian enveloped viruses by directly tethering nascent virions to the membranes of infected cells. Acts as a direct physical tether, holding virions to the cell membrane and linking virions to each other. The tethered virions can be internalized by endocytosis and subsequently degraded or they can remain on the cell surface. In either case, their spread as cell-free virions is restricted. Its target viruses belong to diverse families, including retroviridae: human immunodeficiency virus type 1 (HIV-1), mouse mammary tumor virus (MMTV) and murine leukemia virus (MLV), filoviridae: ebola virus (EBOV), arenaviridae: lassa virus (LASV), and rhabdoviridae: vesicular stomatitis virus (VSV). Can inhibit cell surface proteolytic activity of MMP14 causing decreased activation of MMP15 which results in inhibition of cell growth and migration. Can stimulate signaling by LILRA4/ILT7 and consequently provide negative feedback to the production of IFN by plasmacytoid dendritic cells in response to viral infection. Plays a role in the organization of the subapical actin cytoskeleton in polarized epithelial cells. The sequence is that of Bone marrow stromal antigen 2 (Bst2) from Mus musculus (Mouse).